Here is a 95-residue protein sequence, read N- to C-terminus: MKWVTGLLVVLLLGLQYKLWIGEGSVAEVWQLRQTLEAQRAENEELRYRNAALDAEVTDLKTGLDAIEERARRELGMIRRDETFFQVVGRPGETP.

The Cytoplasmic portion of the chain corresponds to 1–3 (MKW). Residues 4 to 21 (VTGLLVVLLLGLQYKLWI) form a helical membrane-spanning segment. Residues 22–95 (GEGSVAEVWQ…QVVGRPGETP (74 aa)) lie on the Periplasmic side of the membrane. The stretch at 26-73 (VAEVWQLRQTLEAQRAENEELRYRNAALDAEVTDLKTGLDAIEERARR) forms a coiled coil.

The protein belongs to the FtsB family. In terms of assembly, part of a complex composed of FtsB, FtsL and FtsQ.

The protein localises to the cell inner membrane. Essential cell division protein. May link together the upstream cell division proteins, which are predominantly cytoplasmic, with the downstream cell division proteins, which are predominantly periplasmic. The polypeptide is Cell division protein FtsB (Thioalkalivibrio sulfidiphilus (strain HL-EbGR7)).